Consider the following 136-residue polypeptide: Pterin-4-alpha-carbinolamine dehydratase 2 (136 aa).

3 positions are modified to N6-acetyllysine; alternate: lysine 120, lysine 124, and lysine 131. Lysine 120, lysine 124, and lysine 131 each carry N6-succinyllysine; alternate.

Belongs to the pterin-4-alpha-carbinolamine dehydratase family. Homotetramer. Interacts with DYRK1B.

It carries out the reaction (4aS,6R)-4a-hydroxy-L-erythro-5,6,7,8-tetrahydrobiopterin = (6R)-L-erythro-6,7-dihydrobiopterin + H2O. Functionally, involved in tetrahydrobiopterin biosynthesis. Seems to both prevent the formation of 7-pterins and accelerate the formation of quinonoid-BH2. Regulates the dimerization of homeodomain protein HNF-1-alpha and enhances its transcriptional activity. The chain is Pterin-4-alpha-carbinolamine dehydratase 2 (Pcbd2) from Mus musculus (Mouse).